A 444-amino-acid polypeptide reads, in one-letter code: Putative cytochrome P450 120 (444 aa).

Cys-391 serves as a coordination point for heme.

This sequence belongs to the cytochrome P450 family. It depends on heme as a cofactor.

This chain is Putative cytochrome P450 120 (cyp120), found in Synechocystis sp. (strain ATCC 27184 / PCC 6803 / Kazusa).